Consider the following 78-residue polypeptide: Antitoxin VapB2 (78 aa).

The region spanning 4-44 (AKIFMNGQSQAVRLPKEFRFSVKEVSVIPLGKGIVLQPLPN) is the SpoVT-AbrB domain.

It belongs to the VapB family. In terms of assembly, forms complexes with VapC2; probably VapC2(4):VapB2(2) in the absence of DNA, and VapC2(4):VapB2(4) in the presence of DNA. Crystallizes as heterodimers with stoichiometry VapC2(4):VapB2(4) in the presence of its probable promoter DNA. The heterodimers are in contact via alternative VapC-VapC and VapB-VapB interactions. This subunit contacts DNA.

In terms of biological role, antitoxin component of a type II toxin-antitoxin (TA) system. Upon expression in E.coli or S.cerevisiae neutralizes the effect of cognate toxin VapC2, partially inhibits the RNase activity of VapC2. This chain is Antitoxin VapB2 (vapB2), found in Rickettsia felis (strain ATCC VR-1525 / URRWXCal2) (Rickettsia azadi).